The chain runs to 58 residues: Small ribosomal subunit protein bS21 (58 aa).

The protein belongs to the bacterial ribosomal protein bS21 family.

In Staphylococcus aureus (strain bovine RF122 / ET3-1), this protein is Small ribosomal subunit protein bS21.